The chain runs to 346 residues: tRNA N6-adenosine threonylcarbamoyltransferase (346 aa).

Positions 110 and 114 each coordinate Fe cation. Substrate contacts are provided by residues Leu132–Gly136, Asp165, Gly178, and Asn274. Asp298 provides a ligand contact to Fe cation.

It belongs to the KAE1 / TsaD family. Requires Fe(2+) as cofactor.

It is found in the cytoplasm. The enzyme catalyses L-threonylcarbamoyladenylate + adenosine(37) in tRNA = N(6)-L-threonylcarbamoyladenosine(37) in tRNA + AMP + H(+). Its function is as follows. Required for the formation of a threonylcarbamoyl group on adenosine at position 37 (t(6)A37) in tRNAs that read codons beginning with adenine. Is involved in the transfer of the threonylcarbamoyl moiety of threonylcarbamoyl-AMP (TC-AMP) to the N6 group of A37, together with TsaE and TsaB. TsaD likely plays a direct catalytic role in this reaction. This is tRNA N6-adenosine threonylcarbamoyltransferase from Borreliella afzelii (strain PKo) (Borrelia afzelii).